Here is a 144-residue protein sequence, read N- to C-terminus: Large ribosomal subunit protein uL13 (144 aa).

Belongs to the universal ribosomal protein uL13 family. As to quaternary structure, part of the 50S ribosomal subunit.

Its function is as follows. This protein is one of the early assembly proteins of the 50S ribosomal subunit, although it is not seen to bind rRNA by itself. It is important during the early stages of 50S assembly. This Nitrosomonas eutropha (strain DSM 101675 / C91 / Nm57) protein is Large ribosomal subunit protein uL13.